A 734-amino-acid chain; its full sequence is Ribosomal RNA large subunit methyltransferase K/L (734 aa).

The THUMP domain occupies 43–154 (VGYRSCLWSR…RNQLTLSLDL (112 aa)).

Belongs to the methyltransferase superfamily. RlmKL family.

The protein localises to the cytoplasm. It catalyses the reaction guanosine(2445) in 23S rRNA + S-adenosyl-L-methionine = N(2)-methylguanosine(2445) in 23S rRNA + S-adenosyl-L-homocysteine + H(+). It carries out the reaction guanosine(2069) in 23S rRNA + S-adenosyl-L-methionine = N(2)-methylguanosine(2069) in 23S rRNA + S-adenosyl-L-homocysteine + H(+). Its function is as follows. Specifically methylates the guanine in position 2445 (m2G2445) and the guanine in position 2069 (m7G2069) of 23S rRNA. This chain is Ribosomal RNA large subunit methyltransferase K/L, found in Hydrogenovibrio crunogenus (strain DSM 25203 / XCL-2) (Thiomicrospira crunogena).